The chain runs to 428 residues: Palmitoyltransferase ZDHHC23-B (428 aa).

Over 1–82 (MSIMKKRSSR…RVPWISGARQ (82 aa)) the chain is Cytoplasmic. The chain crosses the membrane as a helical span at residues 83–99 (IDVSLIPPLILLPVFLH). Topologically, residues 100–105 (IAALHY) are lumenal. A helical transmembrane segment spans residues 106–125 (LLGIIMLTAMPITVLWYYFF). The Cytoplasmic segment spans residues 126–132 (THRKKGR). A helical transmembrane segment spans residues 133 to 153 (TLFFLGLALFSLFYMFYLFLT). The Lumenal portion of the chain corresponds to 154 to 160 (QVVPRGE). The helical transmembrane segment at 161–181 (VTELQLAVVTAGVALTVIFLM) threads the bilayer. At 182 to 294 (LTKRGPGLVR…SCVGLANHRT (113 aa)) the chain is on the cytoplasmic side. The DHHC domain maps to 250–300 (NWCAVCKVVRPQRAGHCRICGVCVLRLDHHCVWINSCVGLANHRTFLLTLL). Cysteine 280 functions as the S-palmitoyl cysteine intermediate in the catalytic mechanism. The helical transmembrane segment at 295–315 (FLLTLLFFLLTSIYGISLVLA) threads the bilayer. At 316–350 (SVCPDQRVLTALFYCPDVYSQYSSALCFTCAWYSS) the chain is on the lumenal side. A helical transmembrane segment spans residues 351–371 (IVTGGLLHLLLLQILNISLNV). Topologically, residues 372-428 (TEREARLALREKSAQRRLWGLIVHTGHYSRGFWSNWTEFLTMTEDTQPAGHKTEDLV) are cytoplasmic.

It belongs to the DHHC palmitoyltransferase family.

The protein localises to the golgi apparatus membrane. It is found in the golgi apparatus. Its subcellular location is the trans-Golgi network membrane. The catalysed reaction is L-cysteinyl-[protein] + hexadecanoyl-CoA = S-hexadecanoyl-L-cysteinyl-[protein] + CoA. Palmitoyltransferase that could catalyze the addition of palmitate onto various protein substrates and be involved in a variety of cellular processes. In Danio rerio (Zebrafish), this protein is Palmitoyltransferase ZDHHC23-B.